The chain runs to 270 residues: Diaminopimelate epimerase (270 aa).

3 residues coordinate substrate: Asn-15, Gln-49, and Asn-66. Catalysis depends on Cys-75, which acts as the Proton donor. Residues 76–77 (GN), Asn-155, Asn-187, and 204–205 (ER) contribute to the substrate site. The active-site Proton acceptor is the Cys-213. 214 to 215 (GS) provides a ligand contact to substrate.

It belongs to the diaminopimelate epimerase family. In terms of assembly, homodimer.

Its subcellular location is the cytoplasm. The catalysed reaction is (2S,6S)-2,6-diaminopimelate = meso-2,6-diaminopimelate. Its pathway is amino-acid biosynthesis; L-lysine biosynthesis via DAP pathway; DL-2,6-diaminopimelate from LL-2,6-diaminopimelate: step 1/1. Catalyzes the stereoinversion of LL-2,6-diaminopimelate (L,L-DAP) to meso-diaminopimelate (meso-DAP), a precursor of L-lysine and an essential component of the bacterial peptidoglycan. In Rickettsia typhi (strain ATCC VR-144 / Wilmington), this protein is Diaminopimelate epimerase.